A 547-amino-acid polypeptide reads, in one-letter code: Probable bifunctional tRNA threonylcarbamoyladenosine biosynthesis protein (547 aa).

The interval 1-329 (MKKTFILGIE…FRTDDVKVTW (329 aa)) is kae1. 3 residues coordinate Fe cation: H113, H117, and Y134. Residues 134–138 (YVSGA), D166, G179, E183, and N262 contribute to the L-threonylcarbamoyladenylate site. D290 lines the Fe cation pocket. The Protein kinase domain maps to 340–547 (EISPETFFRM…EEIKKRARYA (208 aa)). ATP-binding positions include 355–363 (LDNGAEAVV) and K377. D464 acts as the Proton acceptor; for kinase activity in catalysis.

This sequence in the N-terminal section; belongs to the KAE1 / TsaD family. In the C-terminal section; belongs to the protein kinase superfamily. Tyr protein kinase family. BUD32 subfamily. As to quaternary structure, component of the KEOPS complex that consists of Kae1, Bud32, Cgi121 and Pcc1; the whole complex dimerizes. It depends on Fe(2+) as a cofactor.

Its subcellular location is the cytoplasm. The enzyme catalyses L-seryl-[protein] + ATP = O-phospho-L-seryl-[protein] + ADP + H(+). The catalysed reaction is L-threonyl-[protein] + ATP = O-phospho-L-threonyl-[protein] + ADP + H(+). It catalyses the reaction L-threonylcarbamoyladenylate + adenosine(37) in tRNA = N(6)-L-threonylcarbamoyladenosine(37) in tRNA + AMP + H(+). Functionally, required for the formation of a threonylcarbamoyl group on adenosine at position 37 (t(6)A37) in tRNAs that read codons beginning with adenine. Is a component of the KEOPS complex that is probably involved in the transfer of the threonylcarbamoyl moiety of threonylcarbamoyl-AMP (TC-AMP) to the N6 group of A37. The Kae1 domain likely plays a direct catalytic role in this reaction. The Bud32 domain probably displays kinase activity that regulates Kae1 function. The sequence is that of Probable bifunctional tRNA threonylcarbamoyladenosine biosynthesis protein from Methanosarcina mazei (strain ATCC BAA-159 / DSM 3647 / Goe1 / Go1 / JCM 11833 / OCM 88) (Methanosarcina frisia).